A 995-amino-acid chain; its full sequence is S1 RNA-binding domain-containing protein 1 (995 aa).

A disordered region spans residues 23 to 78 (SFSELSSASEEDDKEDSAWEPQKKVPRSRKQPPPKESKPKRMPQVKKNAPQISDGS). A Glycyl lysine isopeptide (Lys-Gly) (interchain with G-Cter in SUMO2) cross-link involves residue Lys84. Basic residues predominate over residues 116-132 (TKRKCAAQPHAVRRTKK). The tract at residues 116-164 (TKRKCAAQPHAVRRTKKLKVDEETSKASYLEGESNSSETPSTSTVWGGT) is disordered. Lys134 is covalently cross-linked (Glycyl lysine isopeptide (Lys-Gly) (interchain with G-Cter in SUMO2)). The span at 146–159 (EGESNSSETPSTST) shows a compositional bias: low complexity. Glycyl lysine isopeptide (Lys-Gly) (interchain with G-Cter in SUMO2) cross-links involve residues Lys166, Lys167, and Lys183. A Glycyl lysine isopeptide (Lys-Gly) (interchain with G-Cter in SUMO1); alternate cross-link involves residue Lys185. A Glycyl lysine isopeptide (Lys-Gly) (interchain with G-Cter in SUMO2); alternate cross-link involves residue Lys185. Residues 258–288 (ADSLREVQQTLEELRAVAKKVHSTIQKIKKE) adopt a coiled-coil conformation. Ser861 carries the phosphoserine modification. The region spanning 919 to 992 (GTVLTGKVEN…PRSRITLDLI (74 aa)) is the S1 motif domain. Residue Lys955 forms a Glycyl lysine isopeptide (Lys-Gly) (interchain with G-Cter in SUMO2) linkage. Ser964 carries the post-translational modification Phosphoserine.

This chain is S1 RNA-binding domain-containing protein 1 (SRBD1), found in Pongo abelii (Sumatran orangutan).